Reading from the N-terminus, the 162-residue chain is uncharacterized protein (162 aa).

4 helical membrane passes run 10–30 (ILSF…MLIL), 50–70 (IVEL…ALYN), 96–116 (IAQY…IILL), and 125–145 (FTAI…LFIF).

The protein localises to the cell membrane. This is an uncharacterized protein from Methanocaldococcus jannaschii (strain ATCC 43067 / DSM 2661 / JAL-1 / JCM 10045 / NBRC 100440) (Methanococcus jannaschii).